A 219-amino-acid polypeptide reads, in one-letter code: Elongation factor Ts (219 aa).

An involved in Mg(2+) ion dislocation from EF-Tu region spans residues 81–84 (SDFV).

This sequence belongs to the EF-Ts family.

It localises to the cytoplasm. Associates with the EF-Tu.GDP complex and induces the exchange of GDP to GTP. It remains bound to the aminoacyl-tRNA.EF-Tu.GTP complex up to the GTP hydrolysis stage on the ribosome. This is Elongation factor Ts from Koribacter versatilis (strain Ellin345).